A 132-amino-acid polypeptide reads, in one-letter code: ATP synthase epsilon chain 1 (132 aa).

It belongs to the ATPase epsilon chain family. As to quaternary structure, F-type ATPases have 2 components, CF(1) - the catalytic core - and CF(0) - the membrane proton channel. CF(1) has five subunits: alpha(3), beta(3), gamma(1), delta(1), epsilon(1). CF(0) has three main subunits: a, b and c.

Its subcellular location is the cell inner membrane. Functionally, produces ATP from ADP in the presence of a proton gradient across the membrane. This is ATP synthase epsilon chain 1 from Cereibacter sphaeroides (strain ATCC 17023 / DSM 158 / JCM 6121 / CCUG 31486 / LMG 2827 / NBRC 12203 / NCIMB 8253 / ATH 2.4.1.) (Rhodobacter sphaeroides).